Reading from the N-terminus, the 125-residue chain is Large ribosomal subunit protein bL12 (125 aa).

This sequence belongs to the bacterial ribosomal protein bL12 family. As to quaternary structure, homodimer. Part of the ribosomal stalk of the 50S ribosomal subunit. Forms a multimeric L10(L12)X complex, where L10 forms an elongated spine to which 2 to 4 L12 dimers bind in a sequential fashion. Binds GTP-bound translation factors.

Forms part of the ribosomal stalk which helps the ribosome interact with GTP-bound translation factors. Is thus essential for accurate translation. The protein is Large ribosomal subunit protein bL12 of Paraburkholderia phymatum (strain DSM 17167 / CIP 108236 / LMG 21445 / STM815) (Burkholderia phymatum).